Here is a 227-residue protein sequence, read N- to C-terminus: MAHPMQLGFQDAASPIMEELLYFHDHTLMIVFMISSLVLYIISLMLSTELTHTSTMDAQEVETVWTILPAVILILIALPSLRILYMMDEINTPSMTLKTMGHQWYWSYEYTDYDNLCFDSYMVTTPDLEPGDLRLLEVDNRVILPTEMSIRMLISSEDVLHSWTVPALGIKTDAIPGRLNQATLMTSRPGIYYGQCSEICGSNHSFMPIVLELVPLKYFEEWLLKSL.

At Met1–Ser14 the chain is on the mitochondrial intermembrane side. The helical transmembrane segment at Pro15–Met45 threads the bilayer. Topologically, residues Leu46–Gln59 are mitochondrial matrix. Residues Glu60 to Met87 form a helical membrane-spanning segment. Topologically, residues Asp88–Leu227 are mitochondrial intermembrane. Positions 161, 196, 198, 200, 204, and 207 each coordinate Cu cation. A Mg(2+)-binding site is contributed by Glu198. Tyr218 carries the phosphotyrosine modification.

It belongs to the cytochrome c oxidase subunit 2 family. As to quaternary structure, component of the cytochrome c oxidase (complex IV, CIV), a multisubunit enzyme composed of 14 subunits. The complex is composed of a catalytic core of 3 subunits MT-CO1, MT-CO2 and MT-CO3, encoded in the mitochondrial DNA, and 11 supernumerary subunits COX4I, COX5A, COX5B, COX6A, COX6B, COX6C, COX7A, COX7B, COX7C, COX8 and NDUFA4, which are encoded in the nuclear genome. The complex exists as a monomer or a dimer and forms supercomplexes (SCs) in the inner mitochondrial membrane with NADH-ubiquinone oxidoreductase (complex I, CI) and ubiquinol-cytochrome c oxidoreductase (cytochrome b-c1 complex, complex III, CIII), resulting in different assemblies (supercomplex SCI(1)III(2)IV(1) and megacomplex MCI(2)III(2)IV(2)). Found in a complex with TMEM177, COA6, COX18, COX20, SCO1 and SCO2. Interacts with TMEM177 in a COX20-dependent manner. Interacts with COX20. Interacts with COX16. The cofactor is Cu cation.

It localises to the mitochondrion inner membrane. The catalysed reaction is 4 Fe(II)-[cytochrome c] + O2 + 8 H(+)(in) = 4 Fe(III)-[cytochrome c] + 2 H2O + 4 H(+)(out). Functionally, component of the cytochrome c oxidase, the last enzyme in the mitochondrial electron transport chain which drives oxidative phosphorylation. The respiratory chain contains 3 multisubunit complexes succinate dehydrogenase (complex II, CII), ubiquinol-cytochrome c oxidoreductase (cytochrome b-c1 complex, complex III, CIII) and cytochrome c oxidase (complex IV, CIV), that cooperate to transfer electrons derived from NADH and succinate to molecular oxygen, creating an electrochemical gradient over the inner membrane that drives transmembrane transport and the ATP synthase. Cytochrome c oxidase is the component of the respiratory chain that catalyzes the reduction of oxygen to water. Electrons originating from reduced cytochrome c in the intermembrane space (IMS) are transferred via the dinuclear copper A center (CU(A)) of subunit 2 and heme A of subunit 1 to the active site in subunit 1, a binuclear center (BNC) formed by heme A3 and copper B (CU(B)). The BNC reduces molecular oxygen to 2 water molecules using 4 electrons from cytochrome c in the IMS and 4 protons from the mitochondrial matrix. This Nycticebus coucang (Slow loris) protein is Cytochrome c oxidase subunit 2 (MT-CO2).